Consider the following 180-residue polypeptide: MNFKGTTVIAIRRAGKTVVAADGQVTFGYTVLKSNAVKIRKLVNGKILAGFAGSTSDAITLFEKFEEKVKSREDGIIDIKRAAVDLAKDWRADKILHKLEAMMLVADSDNILLISGTGDVVEPEEDVISIGSGGNYAYSAALAYMENKKLSAADIAFKALKIAARVCIYTNSNIVLEEIG.

Thr-6 is a catalytic residue. Residues Ala-164, Cys-167, and Thr-170 each coordinate Na(+).

It belongs to the peptidase T1B family. HslV subfamily. In terms of assembly, a double ring-shaped homohexamer of HslV is capped on each side by a ring-shaped HslU homohexamer. The assembly of the HslU/HslV complex is dependent on binding of ATP.

The protein resides in the cytoplasm. The catalysed reaction is ATP-dependent cleavage of peptide bonds with broad specificity.. Allosterically activated by HslU binding. In terms of biological role, protease subunit of a proteasome-like degradation complex believed to be a general protein degrading machinery. The sequence is that of ATP-dependent protease subunit HslV from Borrelia recurrentis (strain A1).